Reading from the N-terminus, the 358-residue chain is Heat-inducible transcription repressor HrcA (358 aa).

Belongs to the HrcA family.

In terms of biological role, negative regulator of class I heat shock genes (grpE-dnaK-dnaJ and groELS operons). Prevents heat-shock induction of these operons. The polypeptide is Heat-inducible transcription repressor HrcA (Caulobacter vibrioides (strain ATCC 19089 / CIP 103742 / CB 15) (Caulobacter crescentus)).